A 456-amino-acid chain; its full sequence is Putative alanyl-tRNA editing protein alaX (456 aa).

Zn(2+) is bound by residues histidine 125, histidine 129, cysteine 240, and histidine 244.

It belongs to the class-II aminoacyl-tRNA synthetase family. Alax-L subfamily. The cofactor is Zn(2+).

May function in trans to edit the amino acid moiety from incorrectly charged tRNA(Ala). This chain is Putative alanyl-tRNA editing protein alaX, found in Saccharomyces cerevisiae (strain ATCC 204508 / S288c) (Baker's yeast).